The primary structure comprises 118 residues: Probable dihydroneopterin aldolase (118 aa).

Substrate contacts are provided by residues Glu21, Tyr53, and 72-73 (IE). Lys98 functions as the Proton donor/acceptor in the catalytic mechanism.

This sequence belongs to the DHNA family.

The catalysed reaction is 7,8-dihydroneopterin = 6-hydroxymethyl-7,8-dihydropterin + glycolaldehyde. It participates in cofactor biosynthesis; tetrahydrofolate biosynthesis; 2-amino-4-hydroxy-6-hydroxymethyl-7,8-dihydropteridine diphosphate from 7,8-dihydroneopterin triphosphate: step 3/4. Its function is as follows. Catalyzes the conversion of 7,8-dihydroneopterin to 6-hydroxymethyl-7,8-dihydropterin. In Synechocystis sp. (strain ATCC 27184 / PCC 6803 / Kazusa), this protein is Probable dihydroneopterin aldolase (folB).